A 486-amino-acid polypeptide reads, in one-letter code: Arginine/agmatine antiporter (486 aa).

The next 12 helical transmembrane spans lie at leucine 12 to serine 32, alanine 41 to alanine 61, glycine 85 to glycine 105, asparagine 129 to leucine 149, isoleucine 161 to phenylalanine 181, serine 211 to alanine 231, alanine 242 to phenylalanine 262, isoleucine 296 to isoleucine 316, valine 341 to threonine 361, methionine 367 to valine 387, isoleucine 418 to leucine 438, and glutamate 461 to threonine 481.

It belongs to the amino acid-polyamine-organocation (APC) superfamily. Basic amino acid/polyamine antiporter (APA) (TC 2.A.3.2) family.

It is found in the cell inner membrane. Catalyzes the exchange of L-arginine for agmatine. The arginine uptake by the bacterium in the macrophage may be a virulence factor against the host innate immune response. This is Arginine/agmatine antiporter (aaxC) from Chlamydia felis (strain Fe/C-56) (Chlamydophila felis).